The chain runs to 160 residues: Endoribonuclease YbeY (160 aa).

Residues His112, His116, and His122 each contribute to the Zn(2+) site. The interval Glu141 to Lys160 is disordered.

It belongs to the endoribonuclease YbeY family. It depends on Zn(2+) as a cofactor.

Its subcellular location is the cytoplasm. In terms of biological role, single strand-specific metallo-endoribonuclease involved in late-stage 70S ribosome quality control and in maturation of the 3' terminus of the 16S rRNA. This Pseudomonas paraeruginosa (strain DSM 24068 / PA7) (Pseudomonas aeruginosa (strain PA7)) protein is Endoribonuclease YbeY.